A 135-amino-acid polypeptide reads, in one-letter code: Prostate and breast cancer overexpressed gene 1 protein (135 aa).

In terms of tissue distribution, expressed in colon, prostate, small intestine, testis and spleen, with lower expression in thymus, ovary, and peripheral blood leukocytes. Up-regulated expression in prostate, breast, and bladder cancer, but not in lung and colon cancer.

It is found in the cytoplasm. Its subcellular location is the nucleus. The sequence is that of Prostate and breast cancer overexpressed gene 1 protein (PBOV1) from Homo sapiens (Human).